Reading from the N-terminus, the 126-residue chain is KH homology domain-containing protein 1B (126 aa).

Residues 19–78 enclose the KH domain; sequence PLVFDMEEDQEDYIFGPDDEYLHTLEVHSNTLIQLERWFSPTGQTRVTVVGPLKARLWVM.

It belongs to the KHDC1 family.

The sequence is that of KH homology domain-containing protein 1B (Khdc1b) from Mus musculus (Mouse).